We begin with the raw amino-acid sequence, 66 residues long: ATP synthase F(0) complex subunit 8 (66 aa).

Met1 carries the N-formylmethionine modification. A helical membrane pass occupies residues 8–24 (TWLTMILSMFLTLFIIF). The residue at position 54 (Lys54) is an N6-acetyllysine; alternate. Lys54 carries the N6-succinyllysine; alternate modification. Position 57 is an N6-acetyllysine (Lys57).

The protein belongs to the ATPase protein 8 family. In terms of assembly, component of the ATP synthase complex composed at least of ATP5F1A/subunit alpha, ATP5F1B/subunit beta, ATP5MC1/subunit c (homooctomer), MT-ATP6/subunit a, MT-ATP8/subunit 8, ATP5ME/subunit e, ATP5MF/subunit f, ATP5MG/subunit g, ATP5MK/subunit k, ATP5MJ/subunit j, ATP5F1C/subunit gamma, ATP5F1D/subunit delta, ATP5F1E/subunit epsilon, ATP5PF/subunit F6, ATP5PB/subunit b, ATP5PD/subunit d, ATP5PO/subunit OSCP. ATP synthase complex consists of a soluble F(1) head domain (subunits alpha(3) and beta(3)) - the catalytic core - and a membrane F(0) domain - the membrane proton channel (subunits c, a, 8, e, f, g, k and j). These two domains are linked by a central stalk (subunits gamma, delta, and epsilon) rotating inside the F1 region and a stationary peripheral stalk (subunits F6, b, d, and OSCP). Interacts with PRICKLE3.

It is found in the mitochondrion membrane. Functionally, subunit 8, of the mitochondrial membrane ATP synthase complex (F(1)F(0) ATP synthase or Complex V) that produces ATP from ADP in the presence of a proton gradient across the membrane which is generated by electron transport complexes of the respiratory chain. ATP synthase complex consist of a soluble F(1) head domain - the catalytic core - and a membrane F(1) domain - the membrane proton channel. These two domains are linked by a central stalk rotating inside the F(1) region and a stationary peripheral stalk. During catalysis, ATP synthesis in the catalytic domain of F(1) is coupled via a rotary mechanism of the central stalk subunits to proton translocation. In vivo, can only synthesize ATP although its ATP hydrolase activity can be activated artificially in vitro. Part of the complex F(0) domain. This chain is ATP synthase F(0) complex subunit 8, found in Bos taurus (Bovine).